Reading from the N-terminus, the 208-residue chain is Outer-membrane lipoprotein LolB (208 aa).

A signal peptide spans Met1 to Ala23. Residue Cys24 is the site of N-palmitoyl cysteine attachment. Cys24 is lipidated: S-diacylglycerol cysteine.

This sequence belongs to the LolB family. As to quaternary structure, monomer.

The protein localises to the cell outer membrane. In terms of biological role, plays a critical role in the incorporation of lipoproteins in the outer membrane after they are released by the LolA protein. This is Outer-membrane lipoprotein LolB from Photorhabdus laumondii subsp. laumondii (strain DSM 15139 / CIP 105565 / TT01) (Photorhabdus luminescens subsp. laumondii).